The sequence spans 1293 residues: Cilia- and flagella-associated protein 57 A (1293 aa).

Residues 72–113 (PGTKGITCMTLSPSKRLLAWSEDCDSGIIVVFDLIKLDKLEK) form a WD 1 repeat. Positions 117–143 (QNYQEPSDKDKLDKQAEKDRRDRFEKE) are disordered. The span at 122–143 (PSDKDKLDKQAEKDRRDRFEKE) shows a compositional bias: basic and acidic residues. 5 WD repeats span residues 309-348 (PKNE…KNPY), 359-398 (DMKA…MQLN), 411-450 (FHSD…LENS), 535-574 (RGSG…PQKT), and 700-739 (SHFG…YQVK). Coiled-coil stretches lie at residues 756 to 1016 (RDQY…REKT), 1045 to 1079 (IKEL…FKRT), and 1209 to 1285 (INHL…QIQN).

It belongs to the CFAP57 family. Forms a heterodimer with CFAP57C. Associates with components of the nexin-dynein regulatory complex (N-DRC) and the CFAP184:CFAP263 complex.

It localises to the cell projection. The protein resides in the cilium. Its function is as follows. Associates with components of the nexin-dynein regulatory complex (N-DRC), a key regulator of ciliary/flagellar motility, and might act as an inner dynein arm (IDA) hub or linkage. This chain is Cilia- and flagella-associated protein 57 A (CFAP57A), found in Tetrahymena thermophila (strain SB210).